A 1089-amino-acid chain; its full sequence is MQKASVLLFLAWVCFLFYAGIALFTSGFLLTRLELTNHSSCQEPPGPGSLPWGSQGKPGACWMASRFSRVVLVLIDALRFDFAQPQHSHVPREPPVSLPFLGKLSSLQRILEIQPHHARLYRSQVDPPTTTMQRLKALTTGSLPTFIDAGSNFASHAIVEDNLIKQLTSAGRRVVFMGDDTWKDLFPGAFSKAFFFPSFNVRDLDTVDNGILEHLYPTMDSGEWDVLIAHFLGVDHCGHKHGPHHPEMAKKLSQMDQVIQGLVERLENDTLLVVAGDHGMTTNGDHGGDSELEVSAALFLYSPTAVFPSTPPEEPEVIPQVSLVPTLALLLGLPIPFGNIGEVMAELFSGGEDSQPHSSALAQASALHLNAQQVSRFLHTYSAATQDLQAKELHQLQNLFSKASADYQWLLQSPKGAEATLPTVIAELQQFLRGARAMCIESWARFSLVRMAGGTALLAASCFICLLASQWAISPGFPFCPLLLTPVAWGLVGAIAYAGLLGTIELKLDLVLLGAVAAVSSFLPFLWKAWAGWGSKRPLATLFPIPGPVLLLLLFRLAVFFSDSFVVAEARATPFLLGSFILLLVVQLHWEGQLLPPKLLTMPRLGTSATTNPPRHNGAYALRLGIGLLLCTRLAGLFHRCPEETPVCHSSPWLSPLASMVGGRAKNLWYGACVAALVALLAAVRLWLRRYGNLKSPEPPMLFVRWGLPLMALGTAAYWALASGADEAPPRLRVLVSGASMVLPRAVAGLAASGLALLLWKPVTVLVKAGAGAPRTRTVLTPFSGPPTSQADLDYVVPQIYRHMQEEFRGRLERTKSQGPLTVAAYQLGSVYSAAMVTALTLLAFPLLLLHAERISLVFLLLFLQSFLLLHLLAAGIPVTTPGPFTVPWQAVSAWALMATQTFYSTGHQPVFPAIHWHAAFVGFPEGHGSCTWLPALLVGANTFASHLLFAVGCPLLLLWPFLCESQGLRKRQQPPGNEADARVRPEEEEEPLMEMRLRDAPQHFYAALLQLGLKYLFILGIQILACALAASILRRHLMVWKVFAPKFIFEAVGFIVSSVGLLLGIALVMRVDGAVSSWFRQLFLAQQR.

Residues 4 to 24 traverse the membrane as a helical segment; the sequence is ASVLLFLAWVCFLFYAGIALF. An N-linked (GlcNAc...) asparagine glycan is attached at Asn-268. Helical transmembrane passes span 457–477, 482–502, 510–530, 541–561, 575–595, 668–688, 701–721, 747–767, 830–850, 857–877, 944–964, 1014–1034, and 1048–1068; these read LLAA…SPGF, LLLT…GLLG, LVLL…WKAW, TLFP…AVFF, FLLG…GQLL, LWYG…RLWL, MLFV…YWAL, VAGL…TVLV, SVYS…LLLL, LVFL…AAGI, FASH…PFLC, LKYL…ASIL, and FIFE…GIAL.

The protein belongs to the PIGG/PIGN/PIGO family. PIGO subfamily. In terms of assembly, part of the ethanolamine phosphate transferase 3 complex composed by PIGO and PIGF. PIGF is required to stabilize PIGO.

Its subcellular location is the endoplasmic reticulum membrane. The protein operates within glycolipid biosynthesis; glycosylphosphatidylinositol-anchor biosynthesis. Functionally, catalytic subunit of the ethanolamine phosphate transferase 3 complex that transfers an ethanolamine phosphate (EtNP) from a phosphatidylethanolamine (PE) to the 6-OH position of the third alpha-1,2-linked mannose of an alpha-D-Man-(1-&gt;2)-alpha-D-Man-(1-&gt;6)-2-PEtn-alpha-D-Man-(1-&gt;4)-alpha-D-GlcN-(1-&gt;6)-(1-radyl,2-acyl-sn-glycero-3-phospho)-2-acyl-inositol (also termed H6) intermediate to generate a 6-PEtn-alpha-D-Man-(1-&gt;2)-alpha-D-Man-(1-&gt;6)-2-PEtn-alpha-D-Man-(1-&gt;4)-alpha-D-GlcN-(1-&gt;6)-(1-radyl,2-acyl-sn-glycero-3-phospho)-2-acyl-inositol (also termed H7) and participates in the tenth step of the glycosylphosphatidylinositol-anchor biosynthesis. The chain is GPI ethanolamine phosphate transferase 3, catalytic subunit from Homo sapiens (Human).